A 659-amino-acid polypeptide reads, in one-letter code: Protein real-time (659 aa).

Residues 3–175 (QKFQSPVRVY…FIGQLREEGI (173 aa)) enclose the PRELI/MSF1 domain. One can recognise a CRAL-TRIO domain in the interval 286–462 (KPAVVVEHFP…FLGGPCKTMI (177 aa)). At S477 the chain carries Phosphoserine. Residues 512–631 (HRNLYKSVDL…QLNVFYEVLS (120 aa)) enclose the GOLD domain.

Restricted to the developing gut and central nervous system (CNS).

It localises to the mitochondrion. This chain is Protein real-time (retm), found in Drosophila melanogaster (Fruit fly).